Consider the following 269-residue polypeptide: HTH-type transcriptional regulator Rv0792c (269 aa).

One can recognise an HTH gntR-type domain in the interval 20–88 (VPASTQLAEA…QGLGTFVADP (69 aa)). The segment at residues 48–67 (ERELIDRSGLSRVTVRAAVG) is a DNA-binding region (H-T-H motif).

Homodimer.

Its activity is regulated as follows. DNA-binding activity is increased in the presence of L-arabinose and inhibited by the small molecule I-OMe-Tyrphostin. In terms of biological role, transcriptional regulator required for survival in oxidative stress and for establishing infection in host tissues. Regulates the expression of a subset of genes involved in oxidative stress adaptation and virulence, enabling the bacteria to adapt and persist in host tissues. This Mycobacterium tuberculosis (strain ATCC 25618 / H37Rv) protein is HTH-type transcriptional regulator Rv0792c.